The primary structure comprises 348 residues: Quinolinate synthase (348 aa).

Residues His47 and Ser68 each coordinate iminosuccinate. Residue Cys113 participates in [4Fe-4S] cluster binding. Residues 139–141 (YAN) and Ser156 each bind iminosuccinate. Cys200 provides a ligand contact to [4Fe-4S] cluster. Iminosuccinate-binding positions include 226–228 (HPE) and Thr243. Cys297 contributes to the [4Fe-4S] cluster binding site.

It belongs to the quinolinate synthase family. Type 1 subfamily. Requires [4Fe-4S] cluster as cofactor.

Its subcellular location is the cytoplasm. It carries out the reaction iminosuccinate + dihydroxyacetone phosphate = quinolinate + phosphate + 2 H2O + H(+). Its pathway is cofactor biosynthesis; NAD(+) biosynthesis; quinolinate from iminoaspartate: step 1/1. Its function is as follows. Catalyzes the condensation of iminoaspartate with dihydroxyacetone phosphate to form quinolinate. This chain is Quinolinate synthase, found in Sodalis glossinidius (strain morsitans).